The sequence spans 198 residues: Recombination protein RecR (198 aa).

The C4-type zinc-finger motif lies at 57–72 (CSVCNNITDLDPCHIC). The region spanning 80–175 (SIICVVQEPR…RVTRIAHGLP (96 aa)) is the Toprim domain.

It belongs to the RecR family.

Its function is as follows. May play a role in DNA repair. It seems to be involved in an RecBC-independent recombinational process of DNA repair. It may act with RecF and RecO. The chain is Recombination protein RecR from Brevibacillus brevis (strain 47 / JCM 6285 / NBRC 100599).